The primary structure comprises 484 residues: Probable cytochrome P450 555A1 (484 aa).

The chain crosses the membrane as a helical span at residues 1–21; that stretch reads MIIIVIVVFLFYFSFLNLNLN. Residue Cys-432 coordinates heme.

This sequence belongs to the cytochrome P450 family. The cofactor is heme.

The protein localises to the membrane. The chain is Probable cytochrome P450 555A1 (cyp555A1) from Dictyostelium discoideum (Social amoeba).